Consider the following 253-residue polypeptide: uncharacterized protein (253 aa).

This sequence belongs to the NAD(P)-dependent epimerase/dehydratase family.

This is an uncharacterized protein from Bacillus subtilis (strain 168).